The chain runs to 949 residues: Leucine--tRNA ligase (949 aa).

The short motif at Pro-68–His-79 is the 'HIGH' region element. Residues Val-540–Gly-562 form a disordered region. A 'KMSKS' region motif is present at residues Lys-722–Ser-726. Lys-725 is a binding site for ATP.

The protein belongs to the class-I aminoacyl-tRNA synthetase family.

The protein localises to the cytoplasm. It carries out the reaction tRNA(Leu) + L-leucine + ATP = L-leucyl-tRNA(Leu) + AMP + diphosphate. The chain is Leucine--tRNA ligase from Mycolicibacterium gilvum (strain PYR-GCK) (Mycobacterium gilvum (strain PYR-GCK)).